We begin with the raw amino-acid sequence, 48 residues long: Large ribosomal subunit protein eL40 (48 aa).

Belongs to the eukaryotic ribosomal protein eL40 family.

The polypeptide is Large ribosomal subunit protein eL40 (Methanosphaerula palustris (strain ATCC BAA-1556 / DSM 19958 / E1-9c)).